Consider the following 322-residue polypeptide: UV DNA damage endonuclease (322 aa).

Belongs to the uve1/UvsE family.

Component in a DNA repair pathway. Removal of UV LIGHT damaged nucleotides. Recognizes pyrimidine dimers and cleave a phosphodiester bond immediately 5' to the lesion. This chain is UV DNA damage endonuclease, found in Halalkalibacterium halodurans (strain ATCC BAA-125 / DSM 18197 / FERM 7344 / JCM 9153 / C-125) (Bacillus halodurans).